Consider the following 293-residue polypeptide: 4-hydroxy-tetrahydrodipicolinate synthase (293 aa).

Thr-44 lines the pyruvate pocket. The Proton donor/acceptor role is filled by Tyr-132. Lys-160 (schiff-base intermediate with substrate) is an active-site residue. Residue Ile-202 participates in pyruvate binding.

The protein belongs to the DapA family. Homotetramer; dimer of dimers.

Its subcellular location is the cytoplasm. The catalysed reaction is L-aspartate 4-semialdehyde + pyruvate = (2S,4S)-4-hydroxy-2,3,4,5-tetrahydrodipicolinate + H2O + H(+). It functions in the pathway amino-acid biosynthesis; L-lysine biosynthesis via DAP pathway; (S)-tetrahydrodipicolinate from L-aspartate: step 3/4. In terms of biological role, catalyzes the condensation of (S)-aspartate-beta-semialdehyde [(S)-ASA] and pyruvate to 4-hydroxy-tetrahydrodipicolinate (HTPA). The sequence is that of 4-hydroxy-tetrahydrodipicolinate synthase from Pelagibacter ubique (strain HTCC1062).